A 736-amino-acid chain; its full sequence is Gephyrin (736 aa).

Residues 14-153 (QIRVGVLTVS…LPGSKKGSQE (140 aa)) form an MPT Mo-transferase region. 2 disordered regions span residues 181-232 (DELE…DSSS) and 260-290 (TASLSTTPSESPRAQATSRLSTASCPTPKVQ). Positions 187-199 (PSPPPPLSPPPTT) are enriched in pro residues. Over residues 261 to 290 (ASLSTTPSESPRAQATSRLSTASCPTPKVQ) the composition is skewed to polar residues. An MPT adenylyltransferase region spans residues 294–736 (SSKENILRAS…VVDVMVIGRL (443 aa)).

This sequence in the N-terminal section; belongs to the MoaB/Mog family. In the C-terminal section; belongs to the MoeA family. Homotrimer, homodimer and homooligomer. Interacts with glycine receptors. Requires Mg(2+) as cofactor.

It localises to the postsynaptic cell membrane. The protein resides in the cell membrane. The protein localises to the cytoplasm. Its subcellular location is the cytosol. It is found in the cytoskeleton. It localises to the cell projection. The protein resides in the dendrite. The protein localises to the postsynaptic density. The catalysed reaction is molybdopterin + ATP + H(+) = adenylyl-molybdopterin + diphosphate. It carries out the reaction adenylyl-molybdopterin + molybdate = Mo-molybdopterin + AMP + H(+). It participates in cofactor biosynthesis; molybdopterin biosynthesis. Microtubule-associated protein involved in membrane protein-cytoskeleton interactions. It is thought to anchor the inhibitory glycine receptor (GLYR) to subsynaptic microtubules. Acts as a major instructive molecule at inhibitory synapses, where it also clusters GABA type A receptors. Its function is as follows. Also has a catalytic activity and catalyzes two steps in the biosynthesis of the molybdenum cofactor. In the first step, molybdopterin is adenylated. Subsequently, molybdate is inserted into adenylated molybdopterin and AMP is released. This chain is Gephyrin (GPHN), found in Gallus gallus (Chicken).